The chain runs to 558 residues: Dihydroxy-acid dehydratase (558 aa).

Cysteine 50 lines the [2Fe-2S] cluster pocket. Residue aspartate 82 coordinates Mg(2+). Cysteine 123 contacts [2Fe-2S] cluster. Aspartate 124 and lysine 125 together coordinate Mg(2+). The residue at position 125 (lysine 125) is an N6-carboxylysine. Cysteine 195 lines the [2Fe-2S] cluster pocket. Residue glutamate 447 coordinates Mg(2+). Serine 472 acts as the Proton acceptor in catalysis.

Belongs to the IlvD/Edd family. Homodimer. [2Fe-2S] cluster is required as a cofactor. Requires Mg(2+) as cofactor.

It carries out the reaction (2R)-2,3-dihydroxy-3-methylbutanoate = 3-methyl-2-oxobutanoate + H2O. The catalysed reaction is (2R,3R)-2,3-dihydroxy-3-methylpentanoate = (S)-3-methyl-2-oxopentanoate + H2O. Its pathway is amino-acid biosynthesis; L-isoleucine biosynthesis; L-isoleucine from 2-oxobutanoate: step 3/4. It participates in amino-acid biosynthesis; L-valine biosynthesis; L-valine from pyruvate: step 3/4. Functionally, functions in the biosynthesis of branched-chain amino acids. Catalyzes the dehydration of (2R,3R)-2,3-dihydroxy-3-methylpentanoate (2,3-dihydroxy-3-methylvalerate) into 2-oxo-3-methylpentanoate (2-oxo-3-methylvalerate) and of (2R)-2,3-dihydroxy-3-methylbutanoate (2,3-dihydroxyisovalerate) into 2-oxo-3-methylbutanoate (2-oxoisovalerate), the penultimate precursor to L-isoleucine and L-valine, respectively. This Saccharolobus islandicus (strain L.S.2.15 / Lassen #1) (Sulfolobus islandicus) protein is Dihydroxy-acid dehydratase.